We begin with the raw amino-acid sequence, 513 residues long: Histidine ammonia-lyase (513 aa).

A cross-link (5-imidazolinone (Ala-Gly)) is located at residues A144 to G146. At S145 the chain carries 2,3-didehydroalanine (Ser).

The protein belongs to the PAL/histidase family. In terms of processing, contains an active site 4-methylidene-imidazol-5-one (MIO), which is formed autocatalytically by cyclization and dehydration of residues Ala-Ser-Gly.

The protein localises to the cytoplasm. The enzyme catalyses L-histidine = trans-urocanate + NH4(+). Its pathway is amino-acid degradation; L-histidine degradation into L-glutamate; N-formimidoyl-L-glutamate from L-histidine: step 1/3. This Streptococcus pyogenes serotype M49 (strain NZ131) protein is Histidine ammonia-lyase.